A 166-amino-acid chain; its full sequence is Ubiquitin-conjugating enzyme E2-18 kDa (166 aa).

The UBC core domain occupies methionine 5–glycine 165. The active-site Glycyl thioester intermediate is cysteine 90. A Glycyl cysteine thioester (Cys-Gly) (interchain with G-Cter in ubiquitin) cross-link involves residue cysteine 90.

It belongs to the ubiquitin-conjugating enzyme family. In terms of processing, autoubiquitinated at Cys-90; undergoes 'Lys-48'-linked polyubiquitination, which leads to proteasome-dependent protein degradation.

It catalyses the reaction S-ubiquitinyl-[E1 ubiquitin-activating enzyme]-L-cysteine + [E2 ubiquitin-conjugating enzyme]-L-cysteine = [E1 ubiquitin-activating enzyme]-L-cysteine + S-ubiquitinyl-[E2 ubiquitin-conjugating enzyme]-L-cysteine.. The protein operates within protein modification; protein ubiquitination. Its function is as follows. Catalyzes the covalent attachment of ubiquitin to other proteins. Functions in degradation of misfolded or regulated proteins localized in the endoplasmic reticulum (ER) lumen or membrane via the ubiquitin-proteasome system. Cognate E2 conjugating enzyme for the doa10 ubiquitin ligase complex, which is part of the ERAD-C pathway responsible for the rapid degradation of membrane proteins with misfolded cytoplasmic domains, and of the hrd1 ubiquitin ligase complex, which is part of the ERAD-L and ERAD-M pathways responsible for the rapid degradation of soluble lumenal and membrane proteins with misfolded lumenal domains (ERAD-L), or ER-membrane proteins with misfolded transmembrane domains (ERAD-M). Together with hrd1, required for the degradation of the transcription factor sre1 precursor in the absence of its binding partner scp1. Has a role in the formation of chromatin structures that influence the localization of transcriptional silencing factors. This is Ubiquitin-conjugating enzyme E2-18 kDa (ubc7) from Schizosaccharomyces pombe (strain 972 / ATCC 24843) (Fission yeast).